Here is a 1343-residue protein sequence, read N- to C-terminus: DNA-directed RNA polymerase subunit beta (1343 aa).

It belongs to the RNA polymerase beta chain family. As to quaternary structure, the RNAP catalytic core consists of 2 alpha, 1 beta, 1 beta' and 1 omega subunit. When a sigma factor is associated with the core the holoenzyme is formed, which can initiate transcription.

The enzyme catalyses RNA(n) + a ribonucleoside 5'-triphosphate = RNA(n+1) + diphosphate. Its function is as follows. DNA-dependent RNA polymerase catalyzes the transcription of DNA into RNA using the four ribonucleoside triphosphates as substrates. The chain is DNA-directed RNA polymerase subunit beta from Shewanella denitrificans (strain OS217 / ATCC BAA-1090 / DSM 15013).